The sequence spans 172 residues: MERAAKKEAVEALNEVFKTTGVAVVAHYSGLTVAQMQKLRMQMKQAGASVKVSKNRLAKIALEGTDVVAIGSLLKGPTVIATSNDPVAAPKVAVEFAKTNESFVILGGSMGKTVLNVDSVKALASLPSLDELRGKLVGLLVAPATKIAQLSTAPAAKLARVVQAYASKSEAA.

The protein belongs to the universal ribosomal protein uL10 family. Part of the ribosomal stalk of the 50S ribosomal subunit. The N-terminus interacts with L11 and the large rRNA to form the base of the stalk. The C-terminus forms an elongated spine to which L12 dimers bind in a sequential fashion forming a multimeric L10(L12)X complex.

Forms part of the ribosomal stalk, playing a central role in the interaction of the ribosome with GTP-bound translation factors. The polypeptide is Large ribosomal subunit protein uL10 (Nitrobacter hamburgensis (strain DSM 10229 / NCIMB 13809 / X14)).